The primary structure comprises 287 residues: Small ribosomal subunit biogenesis GTPase RsgA (287 aa).

Positions 63 to 223 constitute a CP-type G domain; it reads KNLLIRPKVA…VIDTPGFGSL (161 aa). GTP is bound by residues 113–116 and 166–174; these read SKMD and GQSGVGKST. Residues Cys246, Cys251, His253, and Cys259 each contribute to the Zn(2+) site.

Belongs to the TRAFAC class YlqF/YawG GTPase family. RsgA subfamily. Monomer. Associates with 30S ribosomal subunit, binds 16S rRNA. The cofactor is Zn(2+).

The protein localises to the cytoplasm. Functionally, one of several proteins that assist in the late maturation steps of the functional core of the 30S ribosomal subunit. Helps release RbfA from mature subunits. May play a role in the assembly of ribosomal proteins into the subunit. Circularly permuted GTPase that catalyzes slow GTP hydrolysis, GTPase activity is stimulated by the 30S ribosomal subunit. The sequence is that of Small ribosomal subunit biogenesis GTPase RsgA from Malacoplasma penetrans (strain HF-2) (Mycoplasma penetrans).